The following is a 116-amino-acid chain: UPF0342 protein CTC_01059 (116 aa).

It belongs to the UPF0342 family.

This chain is UPF0342 protein CTC_01059, found in Clostridium tetani (strain Massachusetts / E88).